A 185-amino-acid polypeptide reads, in one-letter code: Small ribosomal subunit protein uS5 (185 aa).

The region spanning 18-81 is the S5 DRBM domain; the sequence is FVDKLVHINR…ESAKRALIRV (64 aa). A disordered region spans residues 157 to 185; it reads SPRSVAARRGIKVSQLQSRRRVEDAEATD. Residues 176–185 are compositionally biased toward basic and acidic residues; sequence RRVEDAEATD.

It belongs to the universal ribosomal protein uS5 family. As to quaternary structure, part of the 30S ribosomal subunit. Contacts proteins S4 and S8.

In terms of biological role, with S4 and S12 plays an important role in translational accuracy. Its function is as follows. Located at the back of the 30S subunit body where it stabilizes the conformation of the head with respect to the body. The protein is Small ribosomal subunit protein uS5 of Xanthobacter autotrophicus (strain ATCC BAA-1158 / Py2).